The chain runs to 154 residues: 6,7-dimethyl-8-ribityllumazine synthase (154 aa).

5-amino-6-(D-ribitylamino)uracil is bound by residues phenylalanine 24, 56–58 (SFE), and 80–82 (AVV). 85–86 (ET) lines the (2S)-2-hydroxy-3-oxobutyl phosphate pocket. Residue histidine 88 is the Proton donor of the active site. Residue phenylalanine 113 coordinates 5-amino-6-(D-ribitylamino)uracil. Residue arginine 127 participates in (2S)-2-hydroxy-3-oxobutyl phosphate binding.

The protein belongs to the DMRL synthase family.

It catalyses the reaction (2S)-2-hydroxy-3-oxobutyl phosphate + 5-amino-6-(D-ribitylamino)uracil = 6,7-dimethyl-8-(1-D-ribityl)lumazine + phosphate + 2 H2O + H(+). Its pathway is cofactor biosynthesis; riboflavin biosynthesis; riboflavin from 2-hydroxy-3-oxobutyl phosphate and 5-amino-6-(D-ribitylamino)uracil: step 1/2. Its function is as follows. Catalyzes the formation of 6,7-dimethyl-8-ribityllumazine by condensation of 5-amino-6-(D-ribitylamino)uracil with 3,4-dihydroxy-2-butanone 4-phosphate. This is the penultimate step in the biosynthesis of riboflavin. The protein is 6,7-dimethyl-8-ribityllumazine synthase of Thermococcus gammatolerans (strain DSM 15229 / JCM 11827 / EJ3).